The chain runs to 260 residues: Cytochrome c oxidase subunit 3 (260 aa).

Helical transmembrane passes span 14–34, 41–61, 81–101, 126–146, 158–178, 196–216, and 238–258; these read PWPLTGAISALMMTSGLILWF, LLLAGTILLLLTVINWWRDVI, GMILFITSEVCFFFAFFWAFF, FLVPLLNTAVLLSSGVTVTWA, AIQGLFLTVILGIYFTGLQAW, FFVATGFHGLHVLIGTTFLFI, and AWYWHFVDVVWLFLYICICWW.

This sequence belongs to the cytochrome c oxidase subunit 3 family. In terms of assembly, component of the cytochrome c oxidase (complex IV, CIV), a multisubunit enzyme composed of a catalytic core of 3 subunits and several supernumerary subunits. The complex exists as a monomer or a dimer and forms supercomplexes (SCs) in the inner mitochondrial membrane with ubiquinol-cytochrome c oxidoreductase (cytochrome b-c1 complex, complex III, CIII).

The protein resides in the mitochondrion inner membrane. It catalyses the reaction 4 Fe(II)-[cytochrome c] + O2 + 8 H(+)(in) = 4 Fe(III)-[cytochrome c] + 2 H2O + 4 H(+)(out). Component of the cytochrome c oxidase, the last enzyme in the mitochondrial electron transport chain which drives oxidative phosphorylation. The respiratory chain contains 3 multisubunit complexes succinate dehydrogenase (complex II, CII), ubiquinol-cytochrome c oxidoreductase (cytochrome b-c1 complex, complex III, CIII) and cytochrome c oxidase (complex IV, CIV), that cooperate to transfer electrons derived from NADH and succinate to molecular oxygen, creating an electrochemical gradient over the inner membrane that drives transmembrane transport and the ATP synthase. Cytochrome c oxidase is the component of the respiratory chain that catalyzes the reduction of oxygen to water. Electrons originating from reduced cytochrome c in the intermembrane space (IMS) are transferred via the dinuclear copper A center (CU(A)) of subunit 2 and heme A of subunit 1 to the active site in subunit 1, a binuclear center (BNC) formed by heme A3 and copper B (CU(B)). The BNC reduces molecular oxygen to 2 water molecules using 4 electrons from cytochrome c in the IMS and 4 protons from the mitochondrial matrix. The chain is Cytochrome c oxidase subunit 3 (COIII) from Patiria pectinifera (Starfish).